Here is a 164-residue protein sequence, read N- to C-terminus: Succinate dehydrogenase assembly factor 2, mitochondrial (164 aa).

Residues 1–27 (MAVVTLIPTLARVLSKHSLLSPLLSVT) constitute a mitochondrion transit peptide.

Belongs to the SDHAF2 family. In terms of assembly, interacts with SDHA within the SDH catalytic dimer.

Its subcellular location is the mitochondrion matrix. Plays an essential role in the assembly of succinate dehydrogenase (SDH), an enzyme complex (also referred to as respiratory complex II) that is a component of both the tricarboxylic acid (TCA) cycle and the mitochondrial electron transport chain, and which couples the oxidation of succinate to fumarate with the reduction of ubiquinone (coenzyme Q) to ubiquinol. Required for flavinylation (covalent attachment of FAD) of the flavoprotein subunit SDHA of the SDH catalytic dimer. The protein is Succinate dehydrogenase assembly factor 2, mitochondrial of Rattus norvegicus (Rat).